Consider the following 243-residue polypeptide: Cytochrome c1, heme protein (243 aa).

The Mitochondrial intermembrane segment spans residues glycine 1–lysine 201. A Cytochrome c domain is found at histidine 5–asparagine 194. Heme is bound by residues cysteine 39, histidine 40, and methionine 159. A helical membrane pass occupies residues leucine 202–tyrosine 221. The Mitochondrial matrix portion of the chain corresponds to asparagine 222–lysine 243.

The protein belongs to the cytochrome c family. Component of the ubiquinol-cytochrome c oxidoreductase (cytochrome b-c1 complex, complex III, CIII), a multisubunit enzyme composed of 3 respiratory subunits cytochrome b, cytochrome c1 and Rieske protein, 2 core protein subunits, and additional low-molecular weight protein subunits. The complex exists as an obligatory dimer and forms supercomplexes (SCs) in the inner mitochondrial membrane with cytochrome c oxidase (complex IV, CIV). Heme serves as cofactor.

The protein localises to the mitochondrion inner membrane. The enzyme catalyses a quinol + 2 Fe(III)-[cytochrome c](out) = a quinone + 2 Fe(II)-[cytochrome c](out) + 2 H(+)(out). Component of the ubiquinol-cytochrome c oxidoreductase, a multisubunit transmembrane complex that is part of the mitochondrial electron transport chain which drives oxidative phosphorylation. The respiratory chain contains 3 multisubunit complexes succinate dehydrogenase (complex II, CII), ubiquinol-cytochrome c oxidoreductase (cytochrome b-c1 complex, complex III, CIII) and cytochrome c oxidase (complex IV, CIV), that cooperate to transfer electrons derived from NADH and succinate to molecular oxygen, creating an electrochemical gradient over the inner membrane that drives transmembrane transport and the ATP synthase. The cytochrome b-c1 complex catalyzes electron transfer from ubiquinol to cytochrome c, linking this redox reaction to translocation of protons across the mitochondrial inner membrane, with protons being carried across the membrane as hydrogens on the quinol. In the process called Q cycle, 2 protons are consumed from the matrix, 4 protons are released into the intermembrane space and 2 electrons are passed to cytochrome c. Cytochrome c1 is a catalytic core subunit containing a c-type heme. It transfers electrons from the [2Fe-2S] iron-sulfur cluster of the Rieske protein to cytochrome c. This is Cytochrome c1, heme protein from Euglena gracilis.